Here is a 150-residue protein sequence, read N- to C-terminus: UPF0178 protein ECA0873 (150 aa).

Belongs to the UPF0178 family.

This is UPF0178 protein ECA0873 from Pectobacterium atrosepticum (strain SCRI 1043 / ATCC BAA-672) (Erwinia carotovora subsp. atroseptica).